A 70-amino-acid polypeptide reads, in one-letter code: Small ribosomal subunit protein bS21 (70 aa).

It belongs to the bacterial ribosomal protein bS21 family.

In Nitratidesulfovibrio vulgaris (strain ATCC 29579 / DSM 644 / CCUG 34227 / NCIMB 8303 / VKM B-1760 / Hildenborough) (Desulfovibrio vulgaris), this protein is Small ribosomal subunit protein bS21.